A 429-amino-acid chain; its full sequence is Enolase (429 aa).

A (2R)-2-phosphoglycerate-binding site is contributed by glutamine 163. Catalysis depends on glutamate 205, which acts as the Proton donor. 3 residues coordinate Mg(2+): aspartate 242, glutamate 285, and aspartate 312. Lysine 337, arginine 366, serine 367, and lysine 388 together coordinate (2R)-2-phosphoglycerate. The active-site Proton acceptor is the lysine 337.

Belongs to the enolase family. Mg(2+) is required as a cofactor.

It is found in the cytoplasm. The protein resides in the secreted. The protein localises to the cell surface. It carries out the reaction (2R)-2-phosphoglycerate = phosphoenolpyruvate + H2O. It functions in the pathway carbohydrate degradation; glycolysis; pyruvate from D-glyceraldehyde 3-phosphate: step 4/5. Functionally, catalyzes the reversible conversion of 2-phosphoglycerate (2-PG) into phosphoenolpyruvate (PEP). It is essential for the degradation of carbohydrates via glycolysis. The chain is Enolase from Methylorubrum populi (strain ATCC BAA-705 / NCIMB 13946 / BJ001) (Methylobacterium populi).